Here is a 218-residue protein sequence, read N- to C-terminus: uncharacterized protein (218 aa).

One can recognise a CN hydrolase domain in the interval Trp4–Ser207.

This is an uncharacterized protein from Escherichia coli (strain K12).